The following is a 481-amino-acid chain: Glutamate--tRNA ligase (481 aa).

Positions 11 to 21 (PSPTGLLHIGN) match the 'HIGH' region motif. The short motif at 255–259 (KLSKR) is the 'KMSKS' region element. K258 serves as a coordination point for ATP.

This sequence belongs to the class-I aminoacyl-tRNA synthetase family. Glutamate--tRNA ligase type 1 subfamily. In terms of assembly, monomer.

Its subcellular location is the cytoplasm. The enzyme catalyses tRNA(Glu) + L-glutamate + ATP = L-glutamyl-tRNA(Glu) + AMP + diphosphate. Functionally, catalyzes the attachment of glutamate to tRNA(Glu) in a two-step reaction: glutamate is first activated by ATP to form Glu-AMP and then transferred to the acceptor end of tRNA(Glu). The polypeptide is Glutamate--tRNA ligase (Streptococcus pyogenes serotype M3 (strain ATCC BAA-595 / MGAS315)).